The chain runs to 341 residues: Ribosomal RNA small subunit methyltransferase H (341 aa).

Residues 47 to 49, Asp-64, Phe-91, Asp-109, and Gln-116 each bind S-adenosyl-L-methionine; that span reads GGY. The segment at 292–318 is disordered; the sequence is VAASEDEASRNPRARSAKLRAGVRTPA.

The protein belongs to the methyltransferase superfamily. RsmH family.

Its subcellular location is the cytoplasm. The catalysed reaction is cytidine(1402) in 16S rRNA + S-adenosyl-L-methionine = N(4)-methylcytidine(1402) in 16S rRNA + S-adenosyl-L-homocysteine + H(+). Its function is as follows. Specifically methylates the N4 position of cytidine in position 1402 (C1402) of 16S rRNA. This Sinorhizobium fredii (strain NBRC 101917 / NGR234) protein is Ribosomal RNA small subunit methyltransferase H.